The sequence spans 62 residues: Teretoxin Tsu1.1 (62 aa).

Positions 1–21 are cleaved as a signal peptide; that stretch reads MSCFPVLFVMMLLASQSVWAF. A propeptide spanning residues 22-40 is cleaved from the precursor; that stretch reads PEPETRIGTARDAESMGVR.

It belongs to the teretoxin A (TA) superfamily. Contains 2 disulfide bonds. In terms of tissue distribution, expressed by the venom duct.

It localises to the secreted. This chain is Teretoxin Tsu1.1, found in Terebra subulata (Chocolate spotted auger).